The chain runs to 136 residues: Ig heavy chain V-A2 region P-MU-3 (136 aa).

Residues 1-19 (METGLRWLLLVAVLKGVQC) form the signal peptide. Q20 is modified (pyrrolidone carboxylic acid). In terms of domain architecture, Ig-like spans 20 to 127 (QSVKESEGGL…ENEFFNAIWG (108 aa)).

This chain is Ig heavy chain V-A2 region P-MU-3, found in Oryctolagus cuniculus (Rabbit).